The sequence spans 627 residues: tRNA uridine 5-carboxymethylaminomethyl modification enzyme MnmG (627 aa).

14-19 (GAGHAG) provides a ligand contact to FAD. 275 to 289 (GPRYCPSIEDKVVKF) is a binding site for NAD(+).

This sequence belongs to the MnmG family. Homodimer. Heterotetramer of two MnmE and two MnmG subunits. Requires FAD as cofactor.

Its subcellular location is the cytoplasm. NAD-binding protein involved in the addition of a carboxymethylaminomethyl (cmnm) group at the wobble position (U34) of certain tRNAs, forming tRNA-cmnm(5)s(2)U34. The protein is tRNA uridine 5-carboxymethylaminomethyl modification enzyme MnmG of Lachnoclostridium phytofermentans (strain ATCC 700394 / DSM 18823 / ISDg) (Clostridium phytofermentans).